A 162-amino-acid chain; its full sequence is Protein-export protein SecB (162 aa).

Belongs to the SecB family. Homotetramer, a dimer of dimers. One homotetramer interacts with 1 SecA dimer.

Its subcellular location is the cytoplasm. One of the proteins required for the normal export of preproteins out of the cell cytoplasm. It is a molecular chaperone that binds to a subset of precursor proteins, maintaining them in a translocation-competent state. It also specifically binds to its receptor SecA. This chain is Protein-export protein SecB, found in Pseudomonas savastanoi pv. phaseolicola (strain 1448A / Race 6) (Pseudomonas syringae pv. phaseolicola (strain 1448A / Race 6)).